The primary structure comprises 1003 residues: Alpha-1,4 glucan phosphorylase L isozyme, chloroplastic/amyloplastic (1003 aa).

The N-terminal 64 residues, 1–64, are a transit peptide targeting the chloroplast; sequence MASMTMRFHP…RRRSAFSVKC (64 aa). 2 disordered regions span residues 71 to 91 and 526 to 593; these read KQKVKDQEVQQEAKTSPSSFA and SSEE…KKLP. Acidic residues predominate over residues 537-553; that stretch reads GEEEETSKEGGEEEEEK. Over residues 569–580 the composition is skewed to basic and acidic residues; sequence EVEKAIAEKDGT. An N6-(pyridoxal phosphate)lysine modification is found at K849.

The protein belongs to the glycogen phosphorylase family. Pyridoxal 5'-phosphate is required as a cofactor. Found predominantly in cotyledons and early seed coat.

The protein resides in the plastid. It localises to the chloroplast. Its subcellular location is the amyloplast. The enzyme catalyses [(1-&gt;4)-alpha-D-glucosyl](n) + phosphate = [(1-&gt;4)-alpha-D-glucosyl](n-1) + alpha-D-glucose 1-phosphate. Its function is as follows. Phosphorylase is an important allosteric enzyme in carbohydrate metabolism. Enzymes from different sources differ in their regulatory mechanisms and in their natural substrates. However, all known phosphorylases share catalytic and structural properties. The L isoform exhibits higher affinity for unbranched substrates such as glucan-like amylose and maltodextrin. This Vicia faba (Broad bean) protein is Alpha-1,4 glucan phosphorylase L isozyme, chloroplastic/amyloplastic (PHO1).